The sequence spans 111 residues: Small ribosomal subunit protein uS10 (111 aa).

The protein belongs to the universal ribosomal protein uS10 family. Part of the 30S ribosomal subunit.

In terms of biological role, involved in the binding of tRNA to the ribosomes. In Protochlamydia amoebophila (strain UWE25), this protein is Small ribosomal subunit protein uS10.